A 383-amino-acid polypeptide reads, in one-letter code: Omega-6 fatty acid desaturase, endoplasmic reticulum isozyme 2 (383 aa).

Transmembrane regions (helical) follow at residues 61–81, 85–105, and 117–137; these read TIAFCLYYVATHYFHLLPGPL, GMAIYWAVQGCILTGVWVIAH, and LLDDIVGLILHSALLVPYFSW. The Histidine box-1 signature appears at 105–109; sequence HECGH. The Histidine box-2 signature appears at 141–145; sequence HRRHH. The next 3 membrane-spanning stretches (helical) occupy residues 179-199, 225-245, and 249-269; these read VLTLAVTLTLGWPLYLALNVS, IYISDAGVLAVVYGLFRLAMA, and AWVVCVYGVPLLVVNGFLVLI. The short motif at 315 to 319 is the Histidine box-3 element; it reads HVAHH.

The protein belongs to the fatty acid desaturase type 1 family.

The protein resides in the endoplasmic reticulum membrane. It participates in lipid metabolism; polyunsaturated fatty acid biosynthesis. Its function is as follows. ER (microsomal) omega-6 fatty acid desaturase introduces the second double bond in the biosynthesis of 18:3 fatty acids, important constituents of plant membranes. It is thought to use cytochrome b5 as an electron donor and to act on fatty acids esterified to phosphatidylcholine and, possibly, other phospholipids. In Glycine max (Soybean), this protein is Omega-6 fatty acid desaturase, endoplasmic reticulum isozyme 2 (FAD2-2).